A 526-amino-acid polypeptide reads, in one-letter code: Tyrosine 2,3-aminomutase (526 aa).

The Proton donor/acceptor role is filled by tyrosine 41. Substrate is bound at residue histidine 71. The segment at residues alanine 130–glycine 132 is a cross-link (5-imidazolinone (Ala-Gly)). Serine 131 carries the post-translational modification 2,3-didehydroalanine (Ser). Residues asparagine 183 and arginine 288 each contribute to the substrate site.

Belongs to the TAL/TAM family. In terms of assembly, homotetramer; dimer of dimers. In terms of processing, contains an active site 4-methylidene-imidazol-5-one (MIO), which is formed autocatalytically by cyclization and dehydration of residues Ala-Ser-Gly.

The catalysed reaction is L-tyrosine = 3-amino-3-(4-hydroxyphenyl)propanoate. It carries out the reaction L-tyrosine = (E)-4-coumarate + NH4(+). Its function is as follows. Has aminomutase and, to a much lesser extent, ammonia-lyase activity. Primarily, catalyzes the rearrangement of L-tyrosine to S-beta-tyrosine, which is probably incorporated into secondary metabolite myxovalargin. The aminomutase activity exclusively produces S-beta-tyrosine. The polypeptide is Tyrosine 2,3-aminomutase (Myxococcus sp. (strain Mx-B0)).